Consider the following 825-residue polypeptide: Phenylalanine--tRNA ligase beta subunit (825 aa).

A tRNA-binding domain is found at 39-154 (RSWAEGVVLG…KAHPLGSDAR (116 aa)). The region spanning 411–506 (PLERTLKLRL…RLYGYDRFSE (96 aa)) is the B5 domain. Mg(2+) contacts are provided by Asp-484, Asp-490, Glu-493, and Glu-494. The FDX-ACB domain occupies 731–824 (SPFPASDRDI…LEKHFPVTLR (94 aa)).

The protein belongs to the phenylalanyl-tRNA synthetase beta subunit family. Type 1 subfamily. In terms of assembly, tetramer of two alpha and two beta subunits. It depends on Mg(2+) as a cofactor.

The protein localises to the cytoplasm. The catalysed reaction is tRNA(Phe) + L-phenylalanine + ATP = L-phenylalanyl-tRNA(Phe) + AMP + diphosphate + H(+). The sequence is that of Phenylalanine--tRNA ligase beta subunit from Synechococcus sp. (strain JA-3-3Ab) (Cyanobacteria bacterium Yellowstone A-Prime).